The primary structure comprises 166 residues: Crossover junction endodeoxyribonuclease RuvC (166 aa).

Catalysis depends on residues Asp7, Glu67, and Asp140. Residues Asp7, Glu67, and Asp140 each contribute to the Mg(2+) site.

This sequence belongs to the RuvC family. Homodimer which binds Holliday junction (HJ) DNA. The HJ becomes 2-fold symmetrical on binding to RuvC with unstacked arms; it has a different conformation from HJ DNA in complex with RuvA. In the full resolvosome a probable DNA-RuvA(4)-RuvB(12)-RuvC(2) complex forms which resolves the HJ. Mg(2+) is required as a cofactor.

The protein localises to the cytoplasm. The enzyme catalyses Endonucleolytic cleavage at a junction such as a reciprocal single-stranded crossover between two homologous DNA duplexes (Holliday junction).. In terms of biological role, the RuvA-RuvB-RuvC complex processes Holliday junction (HJ) DNA during genetic recombination and DNA repair. Endonuclease that resolves HJ intermediates. Cleaves cruciform DNA by making single-stranded nicks across the HJ at symmetrical positions within the homologous arms, yielding a 5'-phosphate and a 3'-hydroxyl group; requires a central core of homology in the junction. The consensus cleavage sequence is 5'-(A/T)TT(C/G)-3'. Cleavage occurs on the 3'-side of the TT dinucleotide at the point of strand exchange. HJ branch migration catalyzed by RuvA-RuvB allows RuvC to scan DNA until it finds its consensus sequence, where it cleaves and resolves the cruciform DNA. In Ruminiclostridium cellulolyticum (strain ATCC 35319 / DSM 5812 / JCM 6584 / H10) (Clostridium cellulolyticum), this protein is Crossover junction endodeoxyribonuclease RuvC.